Consider the following 181-residue polypeptide: MSESVTQQVFNFAVTKSQPFGGYVYSTNLTASTSSAVTSTQLTPLNLSITLGQITLSGNSLVIPATQIWYLTDAYVSVPDYTNITNGAEADGVILIYKDGVKLMLTTPLISSMSISNPARTHLAQAVKYSPQSILTMYFNPTKPATASTSYPNTVYFTVVVVDFSYAQNPARAVVSANAVM.

It is found in the virion. VP4 self-assembles to form, together with capsid protein VP10, an icosahedral caspid of 87 nm in diameter, with a T=43 symmetry and composed of 420 hexamers and 12 pentamers. VP4 proteins arrange into hexons, while VP10 proteins form the pentameric densities located at the 5-fold axes in the virion. The stoichiometry of VP4:VP10 is 42:1. The sequence is that of Capsid protein VP4 from Sulfolobus (SPV1).